The following is a 279-amino-acid chain: Sarcosine/dimethylglycine N-methyltransferase (279 aa).

This sequence belongs to the methyltransferase superfamily. Monomer.

It carries out the reaction sarcosine + 2 S-adenosyl-L-methionine = glycine betaine + 2 S-adenosyl-L-homocysteine + 2 H(+). The catalysed reaction is sarcosine + S-adenosyl-L-methionine = N,N-dimethylglycine + S-adenosyl-L-homocysteine + H(+). The enzyme catalyses N,N-dimethylglycine + S-adenosyl-L-methionine = glycine betaine + S-adenosyl-L-homocysteine + H(+). Its pathway is amine and polyamine biosynthesis; betaine biosynthesis via glycine pathway; betaine from glycine: step 2/3. It participates in amine and polyamine biosynthesis; betaine biosynthesis via glycine pathway; betaine from glycine: step 3/3. P-chloromercuribenzoate acid inhibits 23% of the SDMT activities on sarcosine and dimethylglycine, and S-adenosylhomocysteine (AdoHcy) inhibits completely GSMT activities. Catalyzes the methylation of sarcosine and dimethylglycine to dimethylglycine and betaine, respectively, with S-adenosylmethionine (AdoMet) acting as the methyl donor. It has strict specificity for sarcosine and dimethylglycine as the methyl group acceptors. The sequence is that of Sarcosine/dimethylglycine N-methyltransferase from Halorhodospira halochloris (Ectothiorhodospira halochloris).